The following is a 304-amino-acid chain: Mitochondrial RNA-splicing protein MRS4 (304 aa).

Solcar repeat units follow at residues 21–108 (APLH…CKAR), 118–200 (HQPM…ASKF), and 207–300 (YNPL…AKHF). 6 helical membrane passes run 23–41 (LHSQ…HSLM), 83–102 (GVQS…FGTY), 120–139 (PMKT…ALMN), 175–194 (SYPT…FMIY), 209–228 (PLIH…ALTT), and 275–288 (GLKP…PATA).

It belongs to the mitochondrial carrier (TC 2.A.29) family.

The protein localises to the mitochondrion inner membrane. MRS4 suppresses a mitochondrial splice defect in the first intron of the COB gene. It may act as a carrier, exerting its suppressor activity via modulation of solute concentrations in the mitochondrion (possibly of cations). Not essential. This is Mitochondrial RNA-splicing protein MRS4 (MRS4) from Saccharomyces cerevisiae (strain ATCC 204508 / S288c) (Baker's yeast).